The sequence spans 139 residues: Large ribosomal subunit protein uL16 (139 aa).

Over residues 1–19 the composition is skewed to basic residues; sequence MLIPRRVKYRKQHHPKRTG. Positions 1–23 are disordered; it reads MLIPRRVKYRKQHHPKRTGAAKG.

Belongs to the universal ribosomal protein uL16 family. Part of the 50S ribosomal subunit.

Binds 23S rRNA and is also seen to make contacts with the A and possibly P site tRNAs. This is Large ribosomal subunit protein uL16 from Cutibacterium acnes (strain DSM 16379 / KPA171202) (Propionibacterium acnes).